Reading from the N-terminus, the 284-residue chain is Diaminopimelate epimerase (284 aa).

2 residues coordinate substrate: N14 and N67. C76 (proton donor) is an active-site residue. Substrate is bound by residues 77–78 (GN), N166, N199, and 217–218 (ER). Catalysis depends on C226, which acts as the Proton acceptor. 227-228 (GT) contacts substrate.

It belongs to the diaminopimelate epimerase family. As to quaternary structure, homodimer.

Its subcellular location is the cytoplasm. The catalysed reaction is (2S,6S)-2,6-diaminopimelate = meso-2,6-diaminopimelate. It participates in amino-acid biosynthesis; L-lysine biosynthesis via DAP pathway; DL-2,6-diaminopimelate from LL-2,6-diaminopimelate: step 1/1. Functionally, catalyzes the stereoinversion of LL-2,6-diaminopimelate (L,L-DAP) to meso-diaminopimelate (meso-DAP), a precursor of L-lysine and an essential component of the bacterial peptidoglycan. The protein is Diaminopimelate epimerase of Bacillus subtilis (strain 168).